We begin with the raw amino-acid sequence, 706 residues long: GDNF-inducible zinc finger protein 1 (706 aa).

The region spanning 31-103 (CDVTVSIENQ…VYTAKVRVEE (73 aa)) is the BTB domain. The segment covering 149–165 (VEASSGPQVSVTPSSKA) has biased composition (polar residues). Disordered stretches follow at residues 149 to 220 (VEAS…PKIR) and 242 to 308 (RRLR…KDGE). 2 stretches are compositionally biased toward basic and acidic residues: residues 197–212 (PSKK…KDVA) and 242–277 (RRLR…EPAA). 10 C2H2-type zinc fingers span residues 315–337 (FQCT…IKYH), 346–369 (YRCD…RHVH), 375–398 (FPCE…LQVH), 405–427 (HRCG…ERTH), 433–455 (YGCT…LRVH), 461–483 (FVCD…KRCH), 489–511 (FMCE…NRIH), 517–539 (FKCE…IKVH), 545–567 (YCCD…HRIH), and 573–595 (YMCN…TSIH). A Phosphoserine modification is found at serine 611.

It belongs to the krueppel C2H2-type zinc-finger protein family. Interacts with NCL. As to expression, expressed in several tissues, with highest levels in liver. Also expressed in embryos from 7 to 17 dpc.

The protein resides in the nucleus. Its subcellular location is the cytoplasm. The protein localises to the nucleolus. Functionally, transcriptional repressor that binds the GZF1 responsive element (GRE) (consensus: 5'-TGCGCN[TG][CA]TATA-3'). May be regulating VSX2/HOX10 expression. The polypeptide is GDNF-inducible zinc finger protein 1 (Mus musculus (Mouse)).